The chain runs to 502 residues: Cytochrome P450 CYP94D109 (502 aa).

A helical membrane pass occupies residues 3–23; the sequence is SLSLIFISFITLIVFLVVSAS. Residue C437 participates in heme binding.

This sequence belongs to the cytochrome P450 family. As to expression, mainly expressed in leaves and, at low levels, in roots, fruits and stems.

The protein localises to the membrane. It functions in the pathway steroid metabolism; cholesterol metabolism. Involved in the biosynthesis of spiroketal steroid and saponin natural products from cholesterol such as diosgenin and analogs (e.g. furostanol and spirostanol), plant defense compounds used as main precursors for the industrial production of steroid hormones. During the 5,6-spiroketalization of cholesterol, may catalyze the 27-monohydroxylation of furostanol-type steroid to an intermediate product that undergoes a stereospecific formation of the terminal heterocycle to yield diosgenin. In Paris polyphylla (Daiswa polyphylla), this protein is Cytochrome P450 CYP94D109.